Reading from the N-terminus, the 299-residue chain is GTPase Era (299 aa).

The region spanning 5–172 (KSGFVSIIGR…IDVLKTYLPE (168 aa)) is the Era-type G domain. A G1 region spans residues 13 to 20 (GRPNVGKS). 13-20 (GRPNVGKS) is a GTP binding site. A G2 region spans residues 39–43 (QTTRN). Residues 60-63 (DTPG) form a G3 region. Residues 60–64 (DTPGI) and 122–125 (NKID) contribute to the GTP site. Positions 122–125 (NKID) are G4. A G5 region spans residues 151 to 153 (ISA). Residues 203-280 (TSEEIPHAIG…YLELWVKVQR (78 aa)) enclose the KH type-2 domain.

This sequence belongs to the TRAFAC class TrmE-Era-EngA-EngB-Septin-like GTPase superfamily. Era GTPase family. Monomer.

The protein localises to the cytoplasm. Its subcellular location is the cell membrane. In terms of biological role, an essential GTPase that binds both GDP and GTP, with rapid nucleotide exchange. Plays a role in 16S rRNA processing and 30S ribosomal subunit biogenesis and possibly also in cell cycle regulation and energy metabolism. In Staphylococcus aureus (strain Mu3 / ATCC 700698), this protein is GTPase Era.